Reading from the N-terminus, the 261-residue chain is MTVLQAIVLGLVQGVGEFLPISSSAHLILTPWFFRWPDPGLTFDVALHLGTLIAVVAYFWRDIIELVLSGLGQPRSQDGRLFWYLIVASIPGAIFGVLFEKQAETIFRSPLLIALTLTLMGLGLWWADRVGRKRRQLDDVNLFDGIIVGISQALAIIPGVSRSGITMTAGLLTGMERETAARFSFLMSVPIIAGAALLKLKELPLHEVNLAFIAGVLTAAVVGFLAIKFLLQYLRRGSYLLFTGYRILLAALIVAVFWLRR.

A run of 8 helical transmembrane segments spans residues 1–21 (MTVLQAIVLGLVQGVGEFLPI), 40–60 (GLTFDVALHLGTLIAVVAYFW), 79–99 (GRLFWYLIVASIPGAIFGVLF), 106–126 (IFRSPLLIALTLTLMGLGLWW), 140–160 (VNLFDGIIVGISQALAIIPGV), 185–205 (FLMSVPIIAGAALLKLKELPL), 210–230 (LAFIAGVLTAAVVGFLAIKFL), and 239–259 (YLLFTGYRILLAALIVAVFWL).

This sequence belongs to the UppP family.

It localises to the cell membrane. It carries out the reaction di-trans,octa-cis-undecaprenyl diphosphate + H2O = di-trans,octa-cis-undecaprenyl phosphate + phosphate + H(+). Catalyzes the dephosphorylation of undecaprenyl diphosphate (UPP). Confers resistance to bacitracin. This Moorella thermoacetica (strain ATCC 39073 / JCM 9320) protein is Undecaprenyl-diphosphatase.